The following is a 530-amino-acid chain: GMP synthase [glutamine-hydrolyzing] (530 aa).

Residues 4-205 (RILILDYGSQ…VKDICGCEGD (202 aa)) enclose the Glutamine amidotransferase type-1 domain. C84 acts as the Nucleophile in catalysis. Catalysis depends on residues H179 and E181. A GMPS ATP-PPase domain is found at 206–398 (WNMPDYISEA…LGLPPQMVYR (193 aa)). 233–239 (SGGVDSS) contributes to the ATP binding site.

In terms of assembly, homodimer.

It carries out the reaction XMP + L-glutamine + ATP + H2O = GMP + L-glutamate + AMP + diphosphate + 2 H(+). It functions in the pathway purine metabolism; GMP biosynthesis; GMP from XMP (L-Gln route): step 1/1. Functionally, catalyzes the synthesis of GMP from XMP. This Bordetella bronchiseptica (strain ATCC BAA-588 / NCTC 13252 / RB50) (Alcaligenes bronchisepticus) protein is GMP synthase [glutamine-hydrolyzing].